The primary structure comprises 833 residues: Probable serine/threonine-protein kinase DDB_G0277165 (833 aa).

Residues 9-262 (FIIGKTLGQG…IKEIKEHPWF (254 aa)) enclose the Protein kinase domain. ATP is bound by residues 15-23 (LGQGTTGKV) and lysine 38. Aspartate 133 serves as the catalytic Proton acceptor. In terms of domain architecture, UBA spans 288-329 (QIDEDIFRSLMALGVGTIDEVKQQLVSNQKSATLIYYRLLEE). Over residues 338 to 351 (NKYGYKPKETRRNS) the composition is skewed to basic and acidic residues. 3 disordered regions span residues 338–472 (NKYG…ISPS), 528–626 (QALQ…PIEI), and 764–799 (FINP…GGQN). 2 stretches are compositionally biased toward low complexity: residues 365 to 432 (NNNN…NNNN) and 441 to 459 (SSSQ…QIPS). Over residues 460–472 (NSTSQESMQISPS) the composition is skewed to polar residues. Residues 528–589 (QALQQHHQQQ…SSTSTSPQLS (62 aa)) are compositionally biased toward low complexity. Residues 600–625 (GSMTASTNPATSPTMSHRGKTSSPIE) show a composition bias toward polar residues.

It belongs to the protein kinase superfamily. CAMK Ser/Thr protein kinase family.

It catalyses the reaction L-seryl-[protein] + ATP = O-phospho-L-seryl-[protein] + ADP + H(+). The enzyme catalyses L-threonyl-[protein] + ATP = O-phospho-L-threonyl-[protein] + ADP + H(+). The polypeptide is Probable serine/threonine-protein kinase DDB_G0277165 (Dictyostelium discoideum (Social amoeba)).